Here is a 100-residue protein sequence, read N- to C-terminus: Urease subunit gamma (100 aa).

This sequence belongs to the urease gamma subunit family. In terms of assembly, heterotrimer of UreA (gamma), UreB (beta) and UreC (alpha) subunits. Three heterotrimers associate to form the active enzyme.

The protein resides in the cytoplasm. The enzyme catalyses urea + 2 H2O + H(+) = hydrogencarbonate + 2 NH4(+). It participates in nitrogen metabolism; urea degradation; CO(2) and NH(3) from urea (urease route): step 1/1. The sequence is that of Urease subunit gamma from Leptothrix cholodnii (strain ATCC 51168 / LMG 8142 / SP-6) (Leptothrix discophora (strain SP-6)).